The following is a 731-amino-acid chain: MSTEPNCPFSGNARKHTAAGAPSNADWWPNQLKLNILHQHSAMSDPMGEAFNYAQEFKSLDLEAVKKDLLALMTNSQDWWPADFGHYGPLFIRMAWHSAGTYRVSDGRGGAGSGNQRFAPLNSWPDNVNLDKARRLLWPVKQKYGRKLSWADLMILAGNVALESMGFKTFGFAGGREDIWEPEEDVYWGSENTWLDDKRYSGDRDLENPLGAVQMGLIYVNPEGPNGNPDPIAAARDIRETFARMAMNDEETVALIAGGHTFGKTHGAGDVKHVGPEPEAAGIEEQGLGWNSGFGTGKGGDTISSGLEVTWSTTPTKWGNNYFDNLFGYEWELTTSPAGAQQWKPKGDAGAGTVPDAHDPSKRHAPAMLTTDLSLRLDPAYEKISRRFHENPDQLADAFARAWFKLTHRDMGPLSRYLGPLVPKEQLLWQDPIPAVDHKLVDEQDIAALKTRILASGLSISQLVTTAWASAATFRGSDKRGGANGARIRLAPQKNWEVNQPAELAKVLQKLETIQKDFNSAQSGGKKVSLADLIVLGGCAAVEAAAKKAGQDVKVPFSPGRMDASQEQTDVDSFAVLEPAADGFRNYARKGLEGSAAELLVDKAQLMTLTAPEMTVLIGGLRALNANVGQSKHGVFTKQPETLTNDFFVNLLDMSTKWQKSATSEGVLEGRDRATGELKWTGTIVDLVFGSNSQLRALAEVYACSDSQKSFVRDFVAAWNKVMNLDRFDLA.

A disordered region spans residues 1–24; the sequence is MSTEPNCPFSGNARKHTAAGAPSN. Positions 96–219 form a cross-link, tryptophyl-tyrosyl-methioninium (Trp-Tyr) (with M-245); the sequence is WHSAGTYRVS…LGAVQMGLIY (124 aa). Catalysis depends on histidine 97, which acts as the Proton acceptor. The tryptophyl-tyrosyl-methioninium (Tyr-Met) (with W-96) cross-link spans 219-245; the sequence is YVNPEGPNGNPDPIAAARDIRETFARM. Histidine 260 contributes to the heme b binding site. The tract at residues 339-365 is disordered; the sequence is GAQQWKPKGDAGAGTVPDAHDPSKRHA.

Belongs to the peroxidase family. Peroxidase/catalase subfamily. Homodimer or homotetramer. The cofactor is heme b. In terms of processing, formation of the three residue Trp-Tyr-Met cross-link is important for the catalase, but not the peroxidase activity of the enzyme.

The enzyme catalyses H2O2 + AH2 = A + 2 H2O. The catalysed reaction is 2 H2O2 = O2 + 2 H2O. Bifunctional enzyme with both catalase and broad-spectrum peroxidase activity. The sequence is that of Catalase-peroxidase from Polaromonas sp. (strain JS666 / ATCC BAA-500).